Here is a 144-residue protein sequence, read N- to C-terminus: Bacilliredoxin SSP1311 (144 aa).

It belongs to the bacilliredoxin family.

This is Bacilliredoxin SSP1311 from Staphylococcus saprophyticus subsp. saprophyticus (strain ATCC 15305 / DSM 20229 / NCIMB 8711 / NCTC 7292 / S-41).